The chain runs to 470 residues: MTLADAQPQALDFECETGNYHTFCPISCVAWLYQKIEDSFFLVIGTKTCGYFLQNAMGVMIFAEPRYAMAELEEGDISAKLNDYEELKRLCMQIKRDRNPSVIVWIGTCTTEIIKMDLEGLAPRLESEIDIPIVVARANGLDYAFTQGEDTVLAAMAHRCPKGSAVVEESEKQERGNAITSLLNFGKKKEEVVAEESEYHDHAPLVMFGSLPDPVVTQLTLELKKQGIKVNGWLPAKRFTELPVIDEGYYVAGVNPFLSRTATTLMRRRKCKLIGAPFPIGPDGTRAWIEKICSVLDVEPKGLEEREAKIWANLEDYLEIIRGKSVFFMGDNLLEVSLARFLIRCGMTCPEIGIPYMDKRYQGAELKFLEQTCIDMGVPMPKIVEKPDNYNQVQRIYEHDVDLVITGMAHANPLEARGINTKWSVEFTFAQIHGFTNARDILELVTRPLRRNNSLKDLGWDKLVKEEAKV.

Residues Cys-24, Cys-49, and Cys-109 each contribute to the [4Fe-4S] cluster site.

This sequence belongs to the BchN/ChlN family. Protochlorophyllide reductase is composed of three subunits; ChlL, ChlN and ChlB. Forms a heterotetramer of two ChlB and two ChlN subunits. [4Fe-4S] cluster serves as cofactor.

It carries out the reaction chlorophyllide a + oxidized 2[4Fe-4S]-[ferredoxin] + 2 ADP + 2 phosphate = protochlorophyllide a + reduced 2[4Fe-4S]-[ferredoxin] + 2 ATP + 2 H2O. It functions in the pathway porphyrin-containing compound metabolism; chlorophyll biosynthesis (light-independent). Its function is as follows. Component of the dark-operative protochlorophyllide reductase (DPOR) that uses Mg-ATP and reduced ferredoxin to reduce ring D of protochlorophyllide (Pchlide) to form chlorophyllide a (Chlide). This reaction is light-independent. The NB-protein (ChlN-ChlB) is the catalytic component of the complex. The polypeptide is Light-independent protochlorophyllide reductase subunit N (Acaryochloris marina (strain MBIC 11017)).